A 51-amino-acid chain; its full sequence is Large ribosomal subunit protein eL39 (51 aa).

The protein belongs to the eukaryotic ribosomal protein eL39 family.

The sequence is that of Large ribosomal subunit protein eL39 (rpl39e) from Pyrococcus horikoshii (strain ATCC 700860 / DSM 12428 / JCM 9974 / NBRC 100139 / OT-3).